A 319-amino-acid polypeptide reads, in one-letter code: Transcription factor jun-1 (319 aa).

Disordered stretches follow at residues 1-52 (MEED…EKES) and 216-264 (NGVN…CRQK). Positions 8–19 (PPSSSTSSESPE) are enriched in low complexity. The span at 28–38 (PTRRRKNSKKD) shows a compositional bias: basic residues. The basic motif stretch occupies residues 244 to 285 (KKKLERKRARNRQAATKCRQKKMDRIKELEEQVLHEKHRGQR). Residues 244-307 (KKKLERKRAR…EHFRRTVEHH (64 aa)) enclose the bZIP domain. The segment at 286 to 293 (LDAELLEL) is leucine-zipper.

This sequence belongs to the bZIP family. Jun subfamily. Heterodimer; with fos-1. In terms of tissue distribution, isoform a, isoform b, isoform c and isoform d are expressed in the spermatheca.

Its subcellular location is the nucleus. Functionally, transcription factor that recognizes and binds to the AP-1 non-canonical enhancer heptamer motif 5'-TTAGTCA-3'. Required for ovulation. Controls plc-1 expression in the spermatheca to regulate spermathecal valve dilation. The protein is Transcription factor jun-1 of Caenorhabditis elegans.